The following is a 385-amino-acid chain: Alkanesulfonate monooxygenase (385 aa).

The protein belongs to the SsuD family.

The catalysed reaction is an alkanesulfonate + FMNH2 + O2 = an aldehyde + FMN + sulfite + H2O + 2 H(+). Functionally, catalyzes the desulfonation of aliphatic sulfonates. The chain is Alkanesulfonate monooxygenase from Burkholderia pseudomallei (strain 1710b).